Reading from the N-terminus, the 501-residue chain is Type II methyltransferase M.BsuBI (501 aa).

The protein belongs to the N(4)/N(6)-methyltransferase family.

The catalysed reaction is a 2'-deoxyadenosine in DNA + S-adenosyl-L-methionine = an N(6)-methyl-2'-deoxyadenosine in DNA + S-adenosyl-L-homocysteine + H(+). In terms of biological role, a beta subtype methylase that recognizes the double-stranded sequence 5'-CTGCAG-3', methylates A-5 on both strands, and protects the DNA from cleavage by the BsuBI endonuclease. This is Type II methyltransferase M.BsuBI (hsdBM) from Bacillus subtilis.